The primary structure comprises 249 residues: tRNA 2'-phosphotransferase 1 (249 aa).

Met1 is modified (N-acetylmethionine). Disordered regions lie at residues 1–25 (MNAP…RNVQ) and 220–249 (KPLS…KIQQ).

This sequence belongs to the KptA/TPT1 family.

The enzyme catalyses 2'-phospho-[ligated tRNA] + NAD(+) = mature tRNA + ADP-alpha-D-ribose 1'',2''-cyclic phosphate + nicotinamide. Functionally, catalyzes the last step of tRNA splicing, the transfer of the splice junction 2'-phosphate from ligated tRNA to NAD to produce ADP-ribose 1''-2'' cyclic phosphate. The sequence is that of tRNA 2'-phosphotransferase 1 (Trpt1) from Mus musculus (Mouse).